The following is a 546-amino-acid chain: Membrane protein insertase YidC (546 aa).

The helical transmembrane segment at 8-28 (ILLATVLSVGILILWQVIFPT) threads the bilayer. The tract at residues 31–70 (APPKPAHPPAAEVAKPAAPASPAPGAAAPAVPAPPPDAPE) is disordered. The segment covering 39-60 (PAAEVAKPAAPASPAPGAAAPA) has biased composition (low complexity). A run of 5 helical transmembrane segments spans residues 326–346 (IDYG…LYVM), 356–376 (WGVA…PLTY), 422–442 (LGGC…YAAL), 459–479 (LTAH…SFVM), and 498–518 (FFPG…TLYI).

This sequence belongs to the OXA1/ALB3/YidC family. Type 1 subfamily. As to quaternary structure, interacts with the Sec translocase complex via SecD. Specifically interacts with transmembrane segments of nascent integral membrane proteins during membrane integration.

The protein localises to the cell inner membrane. Required for the insertion and/or proper folding and/or complex formation of integral membrane proteins into the membrane. Involved in integration of membrane proteins that insert both dependently and independently of the Sec translocase complex, as well as at least some lipoproteins. Aids folding of multispanning membrane proteins. This is Membrane protein insertase YidC from Anaeromyxobacter dehalogenans (strain 2CP-1 / ATCC BAA-258).